A 755-amino-acid polypeptide reads, in one-letter code: ABC transporter G family member 2 (755 aa).

One can recognise an ABC transporter domain in the interval 98–358 (LSFTDLTYSV…FSEFKHPIPE (261 aa)). Residue 151 to 158 (GASGSGKS) coordinates ATP. The region spanning 449 to 659 (IEMIVIGKRA…PYEGVLQNEF (211 aa)) is the ABC transmembrane type-2 domain. Helical transmembrane passes span 468–488 (LLGM…TMFT), 503–523 (FFAF…PVFL), 552–572 (IPAL…AVGL), 579–599 (FFFF…FVTF), 609–629 (LGFT…GFFI), and 728–748 (LWIT…TLLI).

Belongs to the ABC transporter superfamily. ABCG family. Eye pigment precursor importer (TC 3.A.1.204) subfamily.

It is found in the membrane. In Arabidopsis thaliana (Mouse-ear cress), this protein is ABC transporter G family member 2 (ABCG2).